We begin with the raw amino-acid sequence, 243 residues long: 1-(5-phosphoribosyl)-5-[(5-phosphoribosylamino)methylideneamino] imidazole-4-carboxamide isomerase (243 aa).

The Proton acceptor role is filled by Asp-8. The active-site Proton donor is Asp-129.

This sequence belongs to the HisA/HisF family.

It is found in the cytoplasm. It catalyses the reaction 1-(5-phospho-beta-D-ribosyl)-5-[(5-phospho-beta-D-ribosylamino)methylideneamino]imidazole-4-carboxamide = 5-[(5-phospho-1-deoxy-D-ribulos-1-ylimino)methylamino]-1-(5-phospho-beta-D-ribosyl)imidazole-4-carboxamide. The protein operates within amino-acid biosynthesis; L-histidine biosynthesis; L-histidine from 5-phospho-alpha-D-ribose 1-diphosphate: step 4/9. In Azorhizobium caulinodans (strain ATCC 43989 / DSM 5975 / JCM 20966 / LMG 6465 / NBRC 14845 / NCIMB 13405 / ORS 571), this protein is 1-(5-phosphoribosyl)-5-[(5-phosphoribosylamino)methylideneamino] imidazole-4-carboxamide isomerase.